The chain runs to 337 residues: MRVLGIETSCDETGIAVYDDEKGLLSHALYSQVKLHADYGGVVPELASRDHVRKIIPLIRQALKEANCTQDDIDAIAYTKGPGLVGALLVGACVGRSLAFAWGKPAVGVHHMEGHLLAPMLEEDVPEFPFLALLVSGGHSMMVAVEGIGRYQVLGESVDDAAGEAFDKTAKLMGLDYPGGPRLAKLAAQGEPNCYRFPRPMTDRPGLDFSFSGLKTFAANTIADEPDDEQTRANIARAFEEAVVDTLAIKCKRALKQTGYNRLVIAGGVSANSRLRESLAEMMQGLGGRVYYPRGEFCTDNGAMIAYAGMQRLKADQLEPLAVKGMPRWPLDSLPPV.

Fe cation is bound by residues His-111 and His-115. Substrate-binding positions include 134-138 (LVSGG), Asp-167, Gly-180, and Asn-272. Residue Asp-300 coordinates Fe cation.

This sequence belongs to the KAE1 / TsaD family. Requires Fe(2+) as cofactor.

It localises to the cytoplasm. It carries out the reaction L-threonylcarbamoyladenylate + adenosine(37) in tRNA = N(6)-L-threonylcarbamoyladenosine(37) in tRNA + AMP + H(+). Its function is as follows. Required for the formation of a threonylcarbamoyl group on adenosine at position 37 (t(6)A37) in tRNAs that read codons beginning with adenine. Is involved in the transfer of the threonylcarbamoyl moiety of threonylcarbamoyl-AMP (TC-AMP) to the N6 group of A37, together with TsaE and TsaB. TsaD likely plays a direct catalytic role in this reaction. This is tRNA N6-adenosine threonylcarbamoyltransferase from Shewanella loihica (strain ATCC BAA-1088 / PV-4).